The primary structure comprises 299 residues: Elongation factor Ts (299 aa).

Residues 81-84 (TDFV) form an involved in Mg(2+) ion dislocation from EF-Tu region.

The protein belongs to the EF-Ts family.

It localises to the cytoplasm. Associates with the EF-Tu.GDP complex and induces the exchange of GDP to GTP. It remains bound to the aminoacyl-tRNA.EF-Tu.GTP complex up to the GTP hydrolysis stage on the ribosome. The protein is Elongation factor Ts of Halothermothrix orenii (strain H 168 / OCM 544 / DSM 9562).